The primary structure comprises 689 residues: SH3 domain-binding protein 1 (689 aa).

The segment covering 1–11 has biased composition (basic residues); that stretch reads MMKRQLHRMRQ. Residues 1–24 are disordered; sequence MMKRQLHRMRQLAHTGSSGRTPET. Positions 1 to 275 are interaction with CGNL1; that stretch reads MMKRQLHRMR…TAAPFSRVYG (275 aa). Residues 17–262 form the BAR domain; sequence SSGRTPETAE…RDNHSQADSS (246 aa). A phosphoserine mark is found at Ser241 and Ser262. The 194-residue stretch at 276-469 folds into the Rho-GAP domain; it reads VSLRTHLQDL…VLIQNADTLF (194 aa). Residues 470-689 are interaction with CD2AP; sequence PGDINFSVSG…RPRGLISETD (220 aa). Positions 507 to 689 are disordered; the sequence is TAATPTPTPA…RPRGLISETD (183 aa). Residues Ser539 and Ser545 each carry the phosphoserine modification. Positions 565–575 are enriched in pro residues; it reads PARPTMPPPQP. Residues 576-594 are compositionally biased toward low complexity; the sequence is SSSRSSPPALSLPAGSVSP. The residue at position 586 (Ser586) is a Phosphoserine. Thr596 bears the Phosphothreonine mark. Residues 611–620 carry the SH3-binding motif; sequence APTVPPPLPP. Residues 613-625 show a composition bias toward pro residues; that stretch reads TVPPPLPPAPPQP. Residue Ser641 is modified to Phosphoserine. Residues 670–680 are compositionally biased toward pro residues; it reads PPTPVLPPQPR.

In terms of assembly, interacts with RAC1. Interacts with the exocyst via EXOC4 and EXOC8; required for the localization of both SH3BP1 and the exocyst to the leading edge of migrating cells. Interacts with CD2AP and CGNL1; probably part of a complex at cell junctions. Interacts with CAPZA1; recruits CAPZA1 to forming cell junctions. May interact with AFDN. Interacts with PLXND1; they dissociate upon SEMA3E binding to PLXND1 allowing SH3BP1 to transduce downstream signal through RAC1 inactivation. Interacts with ABL1, GRB2 and SRC (via SH3 domain).

It localises to the cell projection. The protein localises to the cell junction. Its subcellular location is the tight junction. It is found in the adherens junction. The protein resides in the phagocytic cup. It localises to the nucleus. The protein localises to the cytoplasm. Its subcellular location is the cytosol. Functionally, GTPase activating protein/GAP which specifically converts GTP-bound Rho-type GTPases including RAC1 and CDC42 in their inactive GDP-bound form. By specifically inactivating RAC1 at the leading edge of migrating cells, it regulates the spatiotemporal organization of cell protrusions which is important for proper cell migration. Also negatively regulates CDC42 in the process of actin remodeling and the formation of epithelial cell junctions. Through its GAP activity toward RAC1 and/or CDC42 plays a specific role in phagocytosis of large particles. Specifically recruited by a PI3 kinase/PI3K-dependent mechanism to sites of large particles engagement, inactivates RAC1 and/or CDC42 allowing the reorganization of the underlying actin cytoskeleton required for engulfment. It also plays a role in angiogenesis and the process of repulsive guidance as part of a semaphorin-plexin signaling pathway. Following the binding of PLXND1 to extracellular SEMA3E it dissociates from PLXND1 and inactivates RAC1, inducing the intracellular reorganization of the actin cytoskeleton and the collapse of cells. In Rattus norvegicus (Rat), this protein is SH3 domain-binding protein 1.